Consider the following 952-residue polypeptide: Protein translocase subunit SecA (952 aa).

ATP contacts are provided by residues Gln-104, 122–126, and Asp-512; that span reads GEGKT.

The protein belongs to the SecA family. As to quaternary structure, monomer and homodimer. Part of the essential Sec protein translocation apparatus which comprises SecA, SecYEG and auxiliary proteins SecDF. Other proteins may also be involved.

The protein localises to the cell inner membrane. It is found in the cytoplasm. It catalyses the reaction ATP + H2O + cellular proteinSide 1 = ADP + phosphate + cellular proteinSide 2.. Its function is as follows. Part of the Sec protein translocase complex. Interacts with the SecYEG preprotein conducting channel. Has a central role in coupling the hydrolysis of ATP to the transfer of proteins into and across the cell membrane, serving as an ATP-driven molecular motor driving the stepwise translocation of polypeptide chains across the membrane. The protein is Protein translocase subunit SecA of Gloeobacter violaceus (strain ATCC 29082 / PCC 7421).